A 186-amino-acid chain; its full sequence is MSANNGVTGKLSSRVMNMKFMKFGKTDDEESSNSNTPSNINSDVEPIEQKGKLFGLDDSAWDLNSYKDDLKKISGKEKKKVKRVVYKKRPNLIISNVGYSELRKPEGVISGRKTFGDNSDDSGSRKRKFDEGEQNEDEKRDAKDKEFTGSQDDGEDEYDLDKLFKDSIKKKKTNHNGKNKNRNSKK.

Ser-2 carries the post-translational modification N-acetylserine. Disordered regions lie at residues 22–47 (KFGK…VEPI) and 95–186 (SNVG…NSKK). Residues 32–42 (SNSNTPSNINS) are compositionally biased toward low complexity. The residue at position 42 (Ser-42) is a Phosphoserine. The span at 122 to 147 (SGSRKRKFDEGEQNEDEKRDAKDKEF) shows a compositional bias: basic and acidic residues. Position 150 is a phosphoserine (Ser-150). The span at 168–186 (IKKKKTNHNGKNKNRNSKK) shows a compositional bias: basic residues.

This sequence belongs to the MPP6 family. Associates with the RNA exosome complex.

Its subcellular location is the nucleus. In terms of biological role, RNA-binding protein that associates with the RNA exosome complex. Involved in surveillance of pre-rRNAs and pre-mRNAs, and the degradation of cryptic non-coding RNAs (ncRNA) derived from intergenic regions and the ribosomal DNA spacer heterochromatin. In Saccharomyces cerevisiae (strain ATCC 204508 / S288c) (Baker's yeast), this protein is M-phase phosphoprotein 6 homolog (MPP6).